Reading from the N-terminus, the 415-residue chain is Glucose-6-phosphate isomerase (415 aa).

The Proton donor role is filled by glutamate 267. Catalysis depends on residues histidine 293 and lysine 406.

Belongs to the GPI family.

It is found in the cytoplasm. It catalyses the reaction alpha-D-glucose 6-phosphate = beta-D-fructose 6-phosphate. Its pathway is carbohydrate biosynthesis; gluconeogenesis. It functions in the pathway carbohydrate degradation; glycolysis; D-glyceraldehyde 3-phosphate and glycerone phosphate from D-glucose: step 2/4. Catalyzes the reversible isomerization of glucose-6-phosphate to fructose-6-phosphate. The protein is Glucose-6-phosphate isomerase of Thermus thermophilus (strain ATCC 27634 / DSM 579 / HB8).